The sequence spans 203 residues: Urease accessory protein UreG (203 aa).

14-21 (GPVGSGKT) provides a ligand contact to GTP.

The protein belongs to the SIMIBI class G3E GTPase family. UreG subfamily. In terms of assembly, homodimer. UreD, UreF and UreG form a complex that acts as a GTP-hydrolysis-dependent molecular chaperone, activating the urease apoprotein by helping to assemble the nickel containing metallocenter of UreC. The UreE protein probably delivers the nickel.

It localises to the cytoplasm. In terms of biological role, facilitates the functional incorporation of the urease nickel metallocenter. This process requires GTP hydrolysis, probably effectuated by UreG. This is Urease accessory protein UreG from Sinorhizobium medicae (strain WSM419) (Ensifer medicae).